A 122-amino-acid polypeptide reads, in one-letter code: Large ribosomal subunit protein bL12 (122 aa).

Belongs to the bacterial ribosomal protein bL12 family. In terms of assembly, homodimer. Part of the ribosomal stalk of the 50S ribosomal subunit. Forms a multimeric L10(L12)X complex, where L10 forms an elongated spine to which 2 to 4 L12 dimers bind in a sequential fashion. Binds GTP-bound translation factors.

Forms part of the ribosomal stalk which helps the ribosome interact with GTP-bound translation factors. Is thus essential for accurate translation. The polypeptide is Large ribosomal subunit protein bL12 (Azotobacter vinelandii (strain DJ / ATCC BAA-1303)).